A 138-amino-acid polypeptide reads, in one-letter code: Regulator of ribonuclease activity B (138 aa).

Residues 111–138 (WGTYFEDPNGEEGDDDDYVDEDDDGVRH) form a disordered region. Positions 118-138 (PNGEEGDDDDYVDEDDDGVRH) are enriched in acidic residues.

This sequence belongs to the RraB family. Interacts with the C-terminal region of Rne.

It localises to the cytoplasm. Globally modulates RNA abundance by binding to RNase E (Rne) and regulating its endonucleolytic activity. Can modulate Rne action in a substrate-dependent manner by altering the composition of the degradosome. This Salmonella typhi protein is Regulator of ribonuclease activity B.